Reading from the N-terminus, the 216-residue chain is Putative F-box protein At2g03610 (216 aa).

One can recognise an F-box domain in the interval 19–69; the sequence is NQDWSKLCPDLLRPILESLSSIDFHRAKTVCSDWYSVWKTCKGYDSKWNQN.

The polypeptide is Putative F-box protein At2g03610 (Arabidopsis thaliana (Mouse-ear cress)).